Reading from the N-terminus, the 588-residue chain is Juvenile hormone esterase (588 aa).

The first 23 residues, Met-1–Ala-23, serve as a signal peptide directing secretion. Asn-79 and Asn-83 each carry an N-linked (GlcNAc...) asparagine glycan. Cys-91 and Cys-109 are disulfide-bonded. Ser-214 serves as the catalytic Acyl-ester intermediate. Residue Asn-257 is glycosylated (N-linked (GlcNAc...) asparagine). Residues Cys-268 and Cys-281 are joined by a disulfide bond. Glu-350 acts as the Charge relay system in catalysis. Residues Asn-389, Asn-396, and Asn-472 are each glycosylated (N-linked (GlcNAc...) asparagine). Residue His-479 is the Charge relay system of the active site.

It belongs to the type-B carboxylesterase/lipase family.

The protein resides in the secreted. The enzyme catalyses juvenile hormone III + H2O = juvenile hormone III carboxylate + methanol + H(+). With respect to regulation, inhibited by 3-octylthio-1,1,1-trifluoro-2-propanone (OTFP), a specific inhibitor of juvenile hormone esterase (JHE), but not by diisopropyl fluorophosphate (DFP), a serine enzyme inhibitor. In terms of biological role, may function as a juvenile hormone (JH)-specific degradation enzyme in vivo decreasing JH activity. Hydrolyzes JH III in vitro. Hydrolyzes effectively also methyl hepthylthioacetothioate (HEPTAT), a synthetic substrate. Of the general esterase substrates, it has preference for 2-naphthyl acetate (2-NA) and shows a weak activity for 1-NA and 4-nitrophenylacetate (4-NPA). The sequence is that of Juvenile hormone esterase from Tribolium castaneum (Red flour beetle).